Consider the following 334-residue polypeptide: MNERMVDQSMHSEETDFELSLRPTRLRQYIGQNSIKSNLEVFIKAAKLRHEPLDHVLLFGPPGLGKTTLSNIIANEMEVNIRTVSGPSLERPGDLAAILSGLQPGDVLFIDEIHRLSSVVEEVLYPAMEDFFLDIIIGKGDEARSIRIDLPPFTLVGATTRAGSLTGPLRDRFGVHLRLEYYNESDLKEIIIRTAEVLGTGIDDESAIELAKRSRGTPRVANRLLKRVRDFQQVNEDEQIYIETTKHALGLLQVDQHGLDYIDHKMMNCIIKQYNGGPVGLDTIAVTIGEERITIEDVYEPFLIQKGFLERTPRGRKATPLAYGHFAKSNEERE.

The tract at residues 1 to 182 (MNERMVDQSM…FGVHLRLEYY (182 aa)) is large ATPase domain (RuvB-L). Residues Leu-21, Arg-22, Gly-63, Lys-66, Thr-67, Thr-68, 129 to 131 (EDF), Arg-172, Tyr-182, and Arg-219 contribute to the ATP site. Thr-67 is a binding site for Mg(2+). The tract at residues 183 to 253 (NESDLKEIII…TTKHALGLLQ (71 aa)) is small ATPAse domain (RuvB-S). A head domain (RuvB-H) region spans residues 256–334 (QHGLDYIDHK…HFAKSNEERE (79 aa)). The DNA site is built by Arg-292, Arg-311, and Arg-316.

The protein belongs to the RuvB family. Homohexamer. Forms an RuvA(8)-RuvB(12)-Holliday junction (HJ) complex. HJ DNA is sandwiched between 2 RuvA tetramers; dsDNA enters through RuvA and exits via RuvB. An RuvB hexamer assembles on each DNA strand where it exits the tetramer. Each RuvB hexamer is contacted by two RuvA subunits (via domain III) on 2 adjacent RuvB subunits; this complex drives branch migration. In the full resolvosome a probable DNA-RuvA(4)-RuvB(12)-RuvC(2) complex forms which resolves the HJ.

The protein resides in the cytoplasm. It carries out the reaction ATP + H2O = ADP + phosphate + H(+). Its function is as follows. The RuvA-RuvB-RuvC complex processes Holliday junction (HJ) DNA during genetic recombination and DNA repair, while the RuvA-RuvB complex plays an important role in the rescue of blocked DNA replication forks via replication fork reversal (RFR). RuvA specifically binds to HJ cruciform DNA, conferring on it an open structure. The RuvB hexamer acts as an ATP-dependent pump, pulling dsDNA into and through the RuvAB complex. RuvB forms 2 homohexamers on either side of HJ DNA bound by 1 or 2 RuvA tetramers; 4 subunits per hexamer contact DNA at a time. Coordinated motions by a converter formed by DNA-disengaged RuvB subunits stimulates ATP hydrolysis and nucleotide exchange. Immobilization of the converter enables RuvB to convert the ATP-contained energy into a lever motion, pulling 2 nucleotides of DNA out of the RuvA tetramer per ATP hydrolyzed, thus driving DNA branch migration. The RuvB motors rotate together with the DNA substrate, which together with the progressing nucleotide cycle form the mechanistic basis for DNA recombination by continuous HJ branch migration. Branch migration allows RuvC to scan DNA until it finds its consensus sequence, where it cleaves and resolves cruciform DNA. In Staphylococcus aureus (strain bovine RF122 / ET3-1), this protein is Holliday junction branch migration complex subunit RuvB.